A 461-amino-acid polypeptide reads, in one-letter code: Bifunctional protein GlmU (461 aa).

A pyrophosphorylase region spans residues 1 to 229 (MEKYVVVLAA…FSESLGVNDR (229 aa)). Residues 8-11 (LAAG), K22, Q72, and 77-78 (GT) each bind UDP-N-acetyl-alpha-D-glucosamine. Mg(2+) is bound at residue D102. The UDP-N-acetyl-alpha-D-glucosamine site is built by G139, E154, N169, and N227. Residue N227 participates in Mg(2+) binding. The tract at residues 230-250 (IALAEATRIMQRRINEGHMRD) is linker. Residues 251–461 (GVTFIDPATA…LPLSEDEEWK (211 aa)) form an N-acetyltransferase region. Residues R332 and K350 each contribute to the UDP-N-acetyl-alpha-D-glucosamine site. The active-site Proton acceptor is the H362. Positions 365 and 376 each coordinate UDP-N-acetyl-alpha-D-glucosamine. The acetyl-CoA site is built by A422 and R439.

It in the N-terminal section; belongs to the N-acetylglucosamine-1-phosphate uridyltransferase family. In the C-terminal section; belongs to the transferase hexapeptide repeat family. In terms of assembly, homotrimer. Mg(2+) serves as cofactor.

The protein resides in the cytoplasm. The enzyme catalyses alpha-D-glucosamine 1-phosphate + acetyl-CoA = N-acetyl-alpha-D-glucosamine 1-phosphate + CoA + H(+). It carries out the reaction N-acetyl-alpha-D-glucosamine 1-phosphate + UTP + H(+) = UDP-N-acetyl-alpha-D-glucosamine + diphosphate. The protein operates within nucleotide-sugar biosynthesis; UDP-N-acetyl-alpha-D-glucosamine biosynthesis; N-acetyl-alpha-D-glucosamine 1-phosphate from alpha-D-glucosamine 6-phosphate (route II): step 2/2. It participates in nucleotide-sugar biosynthesis; UDP-N-acetyl-alpha-D-glucosamine biosynthesis; UDP-N-acetyl-alpha-D-glucosamine from N-acetyl-alpha-D-glucosamine 1-phosphate: step 1/1. It functions in the pathway bacterial outer membrane biogenesis; LPS lipid A biosynthesis. Catalyzes the last two sequential reactions in the de novo biosynthetic pathway for UDP-N-acetylglucosamine (UDP-GlcNAc). The C-terminal domain catalyzes the transfer of acetyl group from acetyl coenzyme A to glucosamine-1-phosphate (GlcN-1-P) to produce N-acetylglucosamine-1-phosphate (GlcNAc-1-P), which is converted into UDP-GlcNAc by the transfer of uridine 5-monophosphate (from uridine 5-triphosphate), a reaction catalyzed by the N-terminal domain. In Lactobacillus delbrueckii subsp. bulgaricus (strain ATCC BAA-365 / Lb-18), this protein is Bifunctional protein GlmU.